The following is a 283-amino-acid chain: Acetylglutamate kinase (283 aa).

Substrate contacts are provided by residues 63-64 (GG), arginine 85, and asparagine 178.

Belongs to the acetylglutamate kinase family. ArgB subfamily.

Its subcellular location is the plastid. It is found in the chloroplast. The enzyme catalyses N-acetyl-L-glutamate + ATP = N-acetyl-L-glutamyl 5-phosphate + ADP. The protein operates within amino-acid biosynthesis; L-arginine biosynthesis; N(2)-acetyl-L-ornithine from L-glutamate: step 2/4. Functionally, catalyzes the ATP-dependent phosphorylation of N-acetyl-L-glutamate. This Porphyra purpurea (Red seaweed) protein is Acetylglutamate kinase.